A 196-amino-acid polypeptide reads, in one-letter code: UMP-CMP kinase (196 aa).

ATP is bound at residue 13–18 (GAGKGT). S33 carries the post-translational modification Phosphoserine. The interval 33-63 (SAGELLRDERKNPDSQYGELIEKYIKEGKIV) is NMP. R39 is an a ribonucleoside 5'-phosphate binding site. N6-acetyllysine is present on residues K43 and K55. 61 to 63 (KIV) lines the a ribonucleoside 5'-phosphate pocket. Residue K73 forms a Glycyl lysine isopeptide (Lys-Gly) (interchain with G-Cter in SUMO2) linkage. Residue 93–96 (GFPR) coordinates a ribonucleoside 5'-phosphate. Residue N100 coordinates CMP. At K106 the chain carries N6-succinyllysine. Positions 133–143 (ERGKSSGRSDD) are LID. Residue R134 participates in ATP binding. A ribonucleoside 5'-phosphate is bound by residues R140 and R151. An ATP-binding site is contributed by K179. The residue at position 180 (S180) is a Phosphoserine.

The protein belongs to the adenylate kinase family. UMP-CMP kinase subfamily. As to quaternary structure, monomer. It depends on Mg(2+) as a cofactor.

The protein localises to the nucleus. The protein resides in the cytoplasm. The enzyme catalyses CMP + ATP = CDP + ADP. It catalyses the reaction dCMP + ATP = dCDP + ADP. It carries out the reaction UMP + ATP = UDP + ADP. The catalysed reaction is a 2'-deoxyribonucleoside 5'-diphosphate + ATP = a 2'-deoxyribonucleoside 5'-triphosphate + ADP. The enzyme catalyses a ribonucleoside 5'-diphosphate + ATP = a ribonucleoside 5'-triphosphate + ADP. Catalyzes the phosphorylation of pyrimidine nucleoside monophosphates at the expense of ATP. Plays an important role in de novo pyrimidine nucleotide biosynthesis. Has preference for UMP and CMP as phosphate acceptors. Also displays broad nucleoside diphosphate kinase activity. The polypeptide is UMP-CMP kinase (Cmpk1) (Mus musculus (Mouse)).